The chain runs to 346 residues: Biotin synthase (346 aa).

In terms of domain architecture, Radical SAM core spans 38-256; that stretch reads RQVQVSTLLS…IAVARIMMPT (219 aa). [4Fe-4S] cluster is bound by residues Cys-53, Cys-57, and Cys-60. [2Fe-2S] cluster-binding residues include Cys-97, Cys-128, Cys-188, and Arg-260.

This sequence belongs to the radical SAM superfamily. Biotin synthase family. Homodimer. [4Fe-4S] cluster is required as a cofactor. [2Fe-2S] cluster serves as cofactor.

The catalysed reaction is (4R,5S)-dethiobiotin + (sulfur carrier)-SH + 2 reduced [2Fe-2S]-[ferredoxin] + 2 S-adenosyl-L-methionine = (sulfur carrier)-H + biotin + 2 5'-deoxyadenosine + 2 L-methionine + 2 oxidized [2Fe-2S]-[ferredoxin]. Its pathway is cofactor biosynthesis; biotin biosynthesis; biotin from 7,8-diaminononanoate: step 2/2. Its function is as follows. Catalyzes the conversion of dethiobiotin (DTB) to biotin by the insertion of a sulfur atom into dethiobiotin via a radical-based mechanism. The chain is Biotin synthase from Escherichia coli O157:H7.